The chain runs to 613 residues: Ribosome-associated molecular chaperone SSB1 (613 aa).

The nucleotide binding domain (NBD) stretch occupies residues 1–391 (MADGVFQGAI…ILTGQSTSDE (391 aa)). ATP is bound by residues 16-18 (TTY), Lys73, 205-207 (GGT), 271-278 (ERAKRTLS), and Gly342. The segment at 392–402 (TKDLLLLDVAP) is inter-domain linker. The tract at residues 403–613 (LSLGVGMQGD…RVVTKAMSSR (211 aa)) is substrate binding domain (SBD). Residues 516–612 (SEDIEKMVNQ…KRVVTKAMSS (97 aa)) form a lid domain (SBDalpha) region. The Nuclear export signal signature appears at 574 to 582 (IEAALADAL).

Belongs to the heat shock protein 70 family. Ssb-type Hsp70 subfamily. Binds to ribosomes. Binds close to the ribosomal tunnel exit via contacts with both ribosomal proteins and rRNA. Directly interacts with nascent polypeptides. This interaction is dependent on the ribosome-associated complex (RAC). Interacts with SSE1. Interacts with FES1.

The protein resides in the cytoplasm. It catalyses the reaction ATP + H2O = ADP + phosphate + H(+). In terms of biological role, ribosome-bound, Hsp70-type chaperone that assists in the cotranslational folding of newly synthesized proteins in the cytosol. Stimulates folding by interacting with nascent chains, binding to short, largely hydrophobic sequences exposed by unfolded proteins, thereby stabilizing longer, more slowly translated, and aggregation-prone nascent polypeptides and domains that cannot fold stably until fully synthesized. The Hsp70-protein substrate interaction depends on ATP-binding and on allosteric regulation between the NBD and the SBD. The ATP-bound state is characterized by a fast exchange rate of substrate (low affinity state), while in the ADP-bound state exchange is much slower (high affinity state). During the Hsp70 cycle, the chaperone switches between the ATP-bound state (open conformation) and the ADP-bound state (closed conformation) by major conformational rearrangements involving mainly the lid domain. Ssb cooperates with a specific Hsp40/Hsp70 co-chaperone termed the ribosome-associated complex (RAC), which stimulates the ATPase activity of the ribosome-associated pool of Ssbs and switches it to the high affinity substrate binding state. Hsp110 chaperone SSE1 and FES1 act as nucleotide exchange factors that cause substrate release. This is Ribosome-associated molecular chaperone SSB1 (SSB1) from Nakaseomyces delphensis (Yeast).